A 405-amino-acid chain; its full sequence is Lariat debranching enzyme (405 aa).

A divalent metal cation-binding residues include Cys-11, His-13, Asp-40, and Asn-85. The segment at 125–159 (SGIWKEWDFNKQRPDWNDLENNNWKANIRNLYHVR) is lariat recognition loop. The a divalent metal cation site is built by His-179, His-231, and His-233. The disordered stretch occupies residues 242–277 (HNKRSHEPPNKSTSKTKKNNNEIDLDLSSDEDERSG). Residues 264 to 274 (IDLDLSSDEDE) are compositionally biased toward acidic residues. Ser-269 is modified (phosphoserine).

Belongs to the lariat debranching enzyme family. Fe(2+) is required as a cofactor. It depends on Zn(2+) as a cofactor. The cofactor is Mn(2+).

It localises to the nucleus. The protein localises to the cytoplasm. With respect to regulation, active in presence of diverse metals including Fe(2+), Zn(2+) and Mn(2+). Binds two metal cations in two adjacent alpha and beta metal-binding pockets. The activity is the highest with Fe(2+) bound to the 2 metal-binding sites. Activity is low with Zn(2+) and Mn(2+). Functionally, cleaves the 2'-5' phosphodiester linkage at the branch point of lariat intron pre-mRNAs after splicing and converts them into linear molecules that are subsequently degraded, thereby facilitating ribonucleotide turnover. It also participates in Ty1 retrovirus-like transposition via an RNA lariat intermediate in cDNA synthesis. The polypeptide is Lariat debranching enzyme (DBR1) (Saccharomyces cerevisiae (strain ATCC 204508 / S288c) (Baker's yeast)).